Here is a 65-residue protein sequence, read N- to C-terminus: Large ribosomal subunit protein bL31 (65 aa).

C16, C18, C36, and C39 together coordinate Zn(2+).

Belongs to the bacterial ribosomal protein bL31 family. Type A subfamily. As to quaternary structure, part of the 50S ribosomal subunit. Requires Zn(2+) as cofactor.

In terms of biological role, binds the 23S rRNA. This chain is Large ribosomal subunit protein bL31, found in Brevibacillus brevis (strain 47 / JCM 6285 / NBRC 100599).